We begin with the raw amino-acid sequence, 554 residues long: CTP synthase (554 aa).

Residues 1–265 (MTPLIFVTGG…DELVIDQFKL (265 aa)) form an amidoligase domain region. Serine 13 provides a ligand contact to CTP. A UTP-binding site is contributed by serine 13. ATP-binding positions include 14–19 (SLGKGI) and aspartate 71. Residues aspartate 71 and glutamate 139 each contribute to the Mg(2+) site. CTP is bound by residues 146 to 148 (DIE), 186 to 191 (KTKPTQ), and lysine 222. UTP contacts are provided by residues 186 to 191 (KTKPTQ) and lysine 222. One can recognise a Glutamine amidotransferase type-1 domain in the interval 292 to 545 (TIAVVGKYVD…VRAAREKKAG (254 aa)). Residue glycine 353 coordinates L-glutamine. The Nucleophile; for glutamine hydrolysis role is filled by cysteine 380. Residues 381 to 384 (YGMQ), glutamate 404, and arginine 471 each bind L-glutamine. Catalysis depends on residues histidine 518 and glutamate 520.

Belongs to the CTP synthase family. In terms of assembly, homotetramer.

It catalyses the reaction UTP + L-glutamine + ATP + H2O = CTP + L-glutamate + ADP + phosphate + 2 H(+). The enzyme catalyses L-glutamine + H2O = L-glutamate + NH4(+). It carries out the reaction UTP + NH4(+) + ATP = CTP + ADP + phosphate + 2 H(+). It functions in the pathway pyrimidine metabolism; CTP biosynthesis via de novo pathway; CTP from UDP: step 2/2. Allosterically activated by GTP, when glutamine is the substrate; GTP has no effect on the reaction when ammonia is the substrate. The allosteric effector GTP functions by stabilizing the protein conformation that binds the tetrahedral intermediate(s) formed during glutamine hydrolysis. Inhibited by the product CTP, via allosteric rather than competitive inhibition. In terms of biological role, catalyzes the ATP-dependent amination of UTP to CTP with either L-glutamine or ammonia as the source of nitrogen. Regulates intracellular CTP levels through interactions with the four ribonucleotide triphosphates. In Xanthomonas campestris pv. campestris (strain B100), this protein is CTP synthase.